We begin with the raw amino-acid sequence, 865 residues long: Eukaryotic translation initiation factor 3 subunit C (865 aa).

2 disordered regions span residues 1–92 and 206–243; these read MSRF…AKDK and EDEEEPAPKPKKAAKVSFDEATAEDEEDDEGFARVGKG. 2 stretches are compositionally biased toward acidic residues: residues 16-54 and 69-80; these read SSDEEELYSEEEEEELEDEGDDSDNDGSGDDDSDSDSDA and DDDSSDEEDSDA. The span at 82–92 shows a compositional bias: basic and acidic residues; sequence VTTKVKSAKDK. Positions 226 to 235 are enriched in acidic residues; sequence ATAEDEEDDE. Positions 606–780 constitute a PCI domain; that stretch reads FHMHINLELL…QTVIFRKGVE (175 aa). The disordered stretch occupies residues 801 to 865; it reads SNERTLEQRT…GGALGAAVRA (65 aa). Over residues 808–817 the composition is skewed to polar residues; it reads QRTQGTSNAF. Gly residues predominate over residues 822–841; sequence GRGGRGGGRGRGGGRGGPRF.

The protein belongs to the eIF-3 subunit C family. As to quaternary structure, component of the eukaryotic translation initiation factor 3 (eIF-3) complex.

It is found in the cytoplasm. Functionally, component of the eukaryotic translation initiation factor 3 (eIF-3) complex, which is involved in protein synthesis of a specialized repertoire of mRNAs and, together with other initiation factors, stimulates binding of mRNA and methionyl-tRNAi to the 40S ribosome. The eIF-3 complex specifically targets and initiates translation of a subset of mRNAs involved in cell proliferation. This is Eukaryotic translation initiation factor 3 subunit C from Pyricularia oryzae (strain 70-15 / ATCC MYA-4617 / FGSC 8958) (Rice blast fungus).